Reading from the N-terminus, the 281-residue chain is Probable short-chain type dehydrogenase/reductase blr2146 (281 aa).

Residue 10 to 34 (VVTGAGAGIGKACALAIAREGGRVV) coordinates NAD(+). Substrate is bound at residue Ser-146. Tyr-159 serves as the catalytic Proton acceptor. Residues 261-281 (GNSRAARPAGETAEADAAPRC) are disordered.

It belongs to the short-chain dehydrogenases/reductases (SDR) family.

The polypeptide is Probable short-chain type dehydrogenase/reductase blr2146 (Bradyrhizobium diazoefficiens (strain JCM 10833 / BCRC 13528 / IAM 13628 / NBRC 14792 / USDA 110)).